We begin with the raw amino-acid sequence, 71 residues long: DNA-directed RNA polymerase subunit omega (71 aa).

Belongs to the RNA polymerase subunit omega family. In terms of assembly, the RNAP catalytic core consists of 2 alpha, 1 beta, 1 beta' and 1 omega subunit. When a sigma factor is associated with the core the holoenzyme is formed, which can initiate transcription.

The enzyme catalyses RNA(n) + a ribonucleoside 5'-triphosphate = RNA(n+1) + diphosphate. Functionally, promotes RNA polymerase assembly. Latches the N- and C-terminal regions of the beta' subunit thereby facilitating its interaction with the beta and alpha subunits. The chain is DNA-directed RNA polymerase subunit omega from Levilactobacillus brevis (strain ATCC 367 / BCRC 12310 / CIP 105137 / JCM 1170 / LMG 11437 / NCIMB 947 / NCTC 947) (Lactobacillus brevis).